A 79-amino-acid polypeptide reads, in one-letter code: Small ribosomal subunit protein uS17 (79 aa).

This sequence belongs to the universal ribosomal protein uS17 family. Part of the 30S ribosomal subunit.

Its function is as follows. One of the primary rRNA binding proteins, it binds specifically to the 5'-end of 16S ribosomal RNA. This chain is Small ribosomal subunit protein uS17, found in Mesorhizobium japonicum (strain LMG 29417 / CECT 9101 / MAFF 303099) (Mesorhizobium loti (strain MAFF 303099)).